Here is a 54-residue protein sequence, read N- to C-terminus: Insulin (54 aa).

3 disulfide bridges follow: cysteine 7/cysteine 39, cysteine 19/cysteine 52, and cysteine 38/cysteine 43.

The protein belongs to the insulin family. In terms of assembly, heterodimer of a B chain and an A chain linked by two disulfide bonds.

The protein resides in the secreted. Insulin decreases blood glucose concentration. It increases cell permeability to monosaccharides, amino acids and fatty acids. It accelerates glycolysis, the pentose phosphate cycle, and glycogen synthesis in liver. In Squalus acanthias (Spiny dogfish), this protein is Insulin (ins).